A 116-amino-acid chain; its full sequence is MAGRSGDSDEDLLKAVRLIKFLYQSNPPPNPEGTRQARRNRRRRWRERQRQIHSISERILSTYLGRSAEPVPLQLPPLERLTLDCNEDCGTSGTQGVGSPQILVESPTILESGAKE.

A phosphoserine; by host CK2 mark is found at Ser5 and Ser8. The tract at residues 18–26 (LIKFLYQSN) is homomultimerization. The tract at residues 23–49 (YQSNPPPNPEGTRQARRNRRRRWRERQ) is disordered. Positions 34-50 (TRQARRNRRRRWRERQR) match the Nuclear localization signal and RNA-binding (RRE) motif. A compositionally biased stretch (basic residues) spans 36–47 (QARRNRRRRWRE). Positions 73-84 (LQLPPLERLTLD) match the Nuclear export signal and binding to XPO1 motif. Residues Ser92 and Ser99 each carry the phosphoserine; by host modification.

The protein belongs to the HIV-1 REV protein family. As to quaternary structure, homomultimer; when bound to the RRE. Multimeric assembly is essential for activity and may involve XPO1. Binds to human KPNB1, XPO1, TNPO1, RANBP5 and IPO7. Interacts with the viral Integrase. Interacts with human KHDRBS1. Interacts with human NAP1; this interaction decreases Rev multimerization and stimulates its activity. Interacts with human DEAD-box helicases DDX3 and DDX24; these interactions may serve for viral RNA export to the cytoplasm and packaging, respectively. Interacts with human PSIP1; this interaction may inhibit HIV-1 DNA integration by promoting dissociation of the Integrase-LEDGF/p75 complex. Post-translationally, asymmetrically arginine dimethylated at one site by host PRMT6. Methylation impairs the RNA-binding activity and export of viral RNA from the nucleus to the cytoplasm. In terms of processing, phosphorylated by protein kinase CK2. Presence of, and maybe binding to the N-terminus of the regulatory beta subunit of CK2 is necessary for CK2-mediated Rev's phosphorylation.

It localises to the host nucleus. It is found in the host nucleolus. The protein localises to the host cytoplasm. In terms of biological role, escorts unspliced or incompletely spliced viral pre-mRNAs (late transcripts) out of the nucleus of infected cells. These pre-mRNAs carry a recognition sequence called Rev responsive element (RRE) located in the env gene, that is not present in fully spliced viral mRNAs (early transcripts). This function is essential since most viral proteins are translated from unspliced or partially spliced pre-mRNAs which cannot exit the nucleus by the pathway used by fully processed cellular mRNAs. Rev itself is translated from a fully spliced mRNA that readily exits the nucleus. Rev's nuclear localization signal (NLS) binds directly to KPNB1/Importin beta-1 without previous binding to KPNA1/Importin alpha-1. KPNB1 binds to the GDP bound form of RAN (Ran-GDP) and targets Rev to the nucleus. In the nucleus, the conversion from Ran-GDP to Ran-GTP dissociates Rev from KPNB1 and allows Rev's binding to the RRE in viral pre-mRNAs. Rev multimerization on the RRE via cooperative assembly exposes its nuclear export signal (NES) to the surface. Rev can then form a complex with XPO1/CRM1 and Ran-GTP, leading to nuclear export of the complex. Conversion from Ran-GTP to Ran-GDP mediates dissociation of the Rev/RRE/XPO1/RAN complex, so that Rev can return to the nucleus for a subsequent round of export. Beside KPNB1, also seems to interact with TNPO1/Transportin-1, RANBP5/IPO5 and IPO7/RANBP7 for nuclear import. The nucleoporin-like HRB/RIP is an essential cofactor that probably indirectly interacts with Rev to release HIV RNAs from the perinuclear region to the cytoplasm. The protein is Protein Rev of Human immunodeficiency virus type 1 group M subtype B (isolate HXB3) (HIV-1).